The sequence spans 532 residues: BEL1-like homeodomain protein 6 (532 aa).

The SR/KY domain stretch occupies residues 144–160; it reads SKYLKAAQQLLDEAVNV. A disordered region spans residues 170-203; sequence EGDKNNENPQEPNQSTQDSSTNPPADISQSERQE. A compositionally biased stretch (polar residues) spans 176–197; the sequence is ENPQEPNQSTQDSSTNPPADIS. Residues 200–271 form a BELL domain region; the sequence is ERQEMQSKLT…SLRDAISGQI (72 aa). The segment at residues 314–376 is a DNA-binding region (homeobox); that stretch reads AWRPQRGLPE…NARVRLWKPM (63 aa). The interval 385–434 is disordered; it reads FTENDSNSSSENTPKMSEIGPVAADDEDRAREFSQDQTKPDHGHGYGEET. Over residues 412–434 the composition is skewed to basic and acidic residues; the sequence is DRAREFSQDQTKPDHGHGYGEET.

This sequence belongs to the TALE/BELL homeobox family. In terms of assembly, may form heterodimeric complexes with TALE/KNOX proteins. Interacts with OFP2, OFP4, and OFP5.

The protein resides in the nucleus. In Arabidopsis thaliana (Mouse-ear cress), this protein is BEL1-like homeodomain protein 6 (BLH6).